A 544-amino-acid polypeptide reads, in one-letter code: Protein anon-37Cs (544 aa).

It is found in the cytoplasm. Its function is as follows. Has a non-vital function. This is Protein anon-37Cs (anon-37Cs) from Drosophila lebanonensis (Fruit fly).